A 386-amino-acid polypeptide reads, in one-letter code: Mannitol-1-phosphate 5-dehydrogenase (386 aa).

NAD(+) is bound at residue 6–17 (AIHFGGGNIGRG). K214 is an active-site residue.

The protein belongs to the mannitol dehydrogenase family. As to quaternary structure, monomer.

It catalyses the reaction D-mannitol 1-phosphate + NAD(+) = beta-D-fructose 6-phosphate + NADH + H(+). In terms of biological role, catalyzes the NAD(H)-dependent interconversion of D-fructose 6-phosphate and D-mannitol 1-phosphate in the mannitol metabolic pathway. Plays a key role in liamocins biosynthesis by providing the mannitol moity that is linked to 3,5-dihydroxydecanoic acid (provided by the HR-PKS PKS1) via ester bond formation catalyzed by the esterase EST1. In Aureobasidium melanogenum (Aureobasidium pullulans var. melanogenum), this protein is Mannitol-1-phosphate 5-dehydrogenase.